The primary structure comprises 354 residues: DNA integrity scanning protein DisA (354 aa).

The DAC domain occupies 6 to 144 (DDELKKILKI…GDIKYVLRDS (139 aa)). ATP contacts are provided by residues glycine 73, leucine 91, and 104–108 (TRHRT).

It belongs to the DisA family. Homooctamer. Requires Mg(2+) as cofactor.

It catalyses the reaction 2 ATP = 3',3'-c-di-AMP + 2 diphosphate. In terms of biological role, participates in a DNA-damage check-point that is active prior to asymmetric division when DNA is damaged. DisA forms globular foci that rapidly scan along the chromosomes during sporulation, searching for lesions. When a lesion is present, DisA pauses at the lesion site. This triggers a cellular response that culminates in a temporary block in sporulation initiation. Its function is as follows. Also has diadenylate cyclase activity, catalyzing the condensation of 2 ATP molecules into cyclic di-AMP (c-di-AMP). c-di-AMP acts as a signaling molecule that couples DNA integrity with progression of sporulation. The rise in c-di-AMP level generated by DisA while scanning the chromosome, operates as a positive signal that advances sporulation; upon encountering a lesion, the DisA focus arrests at the damaged site and halts c-di-AMP synthesis. The chain is DNA integrity scanning protein DisA from Clostridium perfringens (strain SM101 / Type A).